The following is a 1770-amino-acid chain: MLLLLTLLLFAGTVAADFQHNWQVGNEYTYLVRSRTLTSLGDLSDVHTGILIKALLTVQAKDSNVLAAKVWNGQYARVQQSMPDGWETEISDQMLELRDLPISGKPFQIRMKHGLIRDLIVDRDVPTWEVNILKSIVGQLQVDTQGENAVKVNSVQVPTDDEPYASFKAMEDSVGGKCEVLYDIAPLSDFVIHRSPELVPMPTLKGDGRHMEVIKIKNFDNCDQRINYHFGMTDNSRLEPGTNKNGKFFSRSSTSRIVISESLKHFTIQSSVTTSKMMVSPRLYDRQNGLVLSRMNLTLAKMEKTSKPLPMVDNPESTGNLVYIYNNPFSDVEERRVSKTAMNSNQIVSDNSLSSSEEKLKQDILNLRTDISSSSSSISSSEENDFWQPKPTLEDAPQNSLLPNFVGYKGKHIGKSGKVDVINAAKELIFQIANELEDASNIPVHATLEKFMILCNLMRTMNRKQISELESNMQISPNELKPNDKSQVIKQNTWTVFRDAITQTGTGPAFLTIKEWIERGTTKSMEAANIMSKLPKTVRTPTDSYIRSFFELLQNPKVSNEQFLNTAATLSFCEMIHNAQVNKRSIHNNYPVHTFGRLTSKHDNSLYDEYIPFLERELRKAHQEKDSPRIQTYIMALGMIGEPKILSVFEPYLEGKQQMTVFQRTLMVGSLGKLTETNPKLARSVLYKIYLNTMESHEVRCTAVFLLMKTNPPLSMLQRMAEFTKLDTNRQVNSAVKSTIQSLMKLKSPEWKDLAKKARSVNHLLTHHEYDYELSRGYIDEKILENQNIITHMILNYVGSEDSVIPRILYLTWYSSNGDIKVPSTKVLAMISSVKSFMELSLRSVKDRETIISAAEKIAEELKIVPEELVPLEGNLMINNKYALKFFPFDKHILDKLPTLISNYIEAVKEGKFMNVNMLDTYESVHSFPTETGLPFVYTFNVIKLTKTSGTVQAQINPDFAFIVNSNLRLTFSKNVQGRVGFVTPFEHRHFISGIDSNLHVYAPLKISLDVNTPKGNMQWKIWPMKGEEKSRLFHYSVVPFVSNHDILNLRPLSMEKGTRPMIPDDNTSLALPKNEGPFRLNVETAKTNEEMWELIDTEKLTDRLPYPWTMDNERYVKVDMYMNLEGEQKDPVIFSTSFDSKVMTRPDTDSENWTPKMMAVEPTDKQANSKTRRQEMMREAGRGIESAKSYVVDVRVHVPGESESETVLTLAWSESNVESKGRLLGFWRVEMPRSNADYEVCIGSQIMVSPETLLSYDEKMDQKPKMDFNVDIRYGKNCGKGERIDMNGKLRQSPRLKELVGATSIIKDCVEDMKRGNKILRTCQKAVVLSMLLDEVDISMEVPSDALIALYSQGLFSLSEIDNLDVSLDVSNPKNAGKKKIDVRAKLNEYLDKADVIVNTPIMDAHFKDVKLSDFGFSTEDILDTADEDLLINNVFYEDETSCMLDKTRAQTFDGKDYPLRLGPCWHAVMTTYPRINPDNHNEKLHIPKDKSVSVLSRENEAGQKEVKVLLGSDKIKFVPGTTSQPEVFVNGEKIVVSRNKAYQKVEENEIIFEIYKMGDRFIGLTSDKFDVSLALDGERVMLKASEDYRYSVRGLCGNFDHDSTNDFVGPKNCLFRKPEHFVASYALISNQCEGDSLNVAKSLQDHDCIRQERTQQRNVISDSESGRLDTEMSTWGYHHNVNKHCTIHRTQVKETDDKICFTMRPVVSCASGCTAVETKSKPYKFHCMEKNEAAMKLKKRIEKGANPDLSQKPVSTTEELTVPFVCKA.

An N-terminal signal peptide occupies residues 1–16 (MLLLLTLLLFAGTVAA). The Vitellogenin domain occupies 22-809 (WQVGNEYTYL…SEDSVIPRIL (788 aa)). C178 and C222 form a disulfide bridge. The N-linked (GlcNAc...) asparagine glycan is linked to N296. The disordered stretch occupies residues 373–394 (SSSSSISSSEENDFWQPKPTLE). N-linked (GlcNAc...) asparagine glycosylation occurs at N1067. Positions 1442 to 1635 (TSCMLDKTRA…SYALISNQCE (194 aa)) constitute a VWFD domain. 2 cysteine pairs are disulfide-bonded: C1444–C1598 and C1466–C1634.

As to expression, accumulates in the hemolymph. Represents up to 70% of the queen's hemolymph proteins. During the first week of the worker adult life, when it becomes a nurse bee and performs brood-rearing tasks, the vitellogenin titer increases and may account for up to 40% of the total hemolymph proteins.

The protein resides in the secreted. In terms of biological role, precursor of the egg-yolk proteins that are sources of nutrients during embryonic development. Involved in the differentiation of honeybee larvae into queens. The sequence is that of Vitellogenin (Vg) from Apis mellifera (Honeybee).